Here is a 1034-residue protein sequence, read N- to C-terminus: Beta-galactosidase (1034 aa).

Glu-481 functions as the Proton donor in the catalytic mechanism. The active-site Nucleophile is Glu-547.

It belongs to the glycosyl hydrolase 2 family.

The catalysed reaction is Hydrolysis of terminal non-reducing beta-D-galactose residues in beta-D-galactosides.. The chain is Beta-galactosidase (bgaM) from Priestia megaterium (strain DSM 319 / IMG 1521) (Bacillus megaterium).